Reading from the N-terminus, the 712-residue chain is Lactoperoxidase (712 aa).

The first 26 residues, 1-26 (MRVLLHLPALLASLILLQAAASTTRA), serve as a signal peptide directing secretion. A propeptide spanning residues 27–80 (QTTRTSAISDTVSQAKVQVNKAFLDSRTRLKTAMSSETPTSRQLSEYLKHAKGR) is cleaved from the precursor. The N-linked (GlcNAc...) asparagine glycan is linked to Asn-106. The cysteines at positions 132 and 145 are disulfide-linked. Asn-212 carries an N-linked (GlcNAc...) asparagine glycan. Residue Asp-225 participates in heme b binding. His-226 serves as the catalytic Proton acceptor. Asp-227 lines the Ca(2+) pocket. Disulfide bonds link Cys-246-Cys-256 and Cys-250-Cys-274. Positions 301, 303, 305, and 307 each coordinate Ca(2+). Ser-315 is modified (phosphoserine). 2 N-linked (GlcNAc...) asparagine glycosylation sites follow: Asn-322 and Asn-358. Cys-354 and Cys-365 are disulfide-bonded. Heme b contacts are provided by Glu-375 and His-468. Tyr-482 carries the 3'-nitrotyrosine modification. 2 disulfides stabilise this stretch: Cys-573-Cys-630 and Cys-671-Cys-696.

This sequence belongs to the peroxidase family. XPO subfamily. The cofactor is Ca(2+). It depends on heme b as a cofactor. In terms of tissue distribution, mammary gland, milk and salivary gland. Found in bronchial submucosal glands.

It localises to the secreted. It is found in the cytoplasm. The catalysed reaction is 2 a phenolic donor + H2O2 = 2 a phenolic radical donor + 2 H2O. It carries out the reaction thiocyanate + H2O2 + H(+) = hypothiocyanous acid + H2O. The enzyme catalyses iodide + H2O2 = hypoiodite + H2O. Functionally, heme-containing oxidoreductase which catalyzes the conversion of thiocyanate (SCN(-)) into antimicrobial agent hypothiocyanous acid (OSCN(-)) in the presence of hydrogen peroxide (H2O2). Also involved in the conversion of iodide (I(-)) into hypoiodite (IO(-)) in the presence of H2O2. Responsible for the inactivation of a wide range of micro-organisms and hence, important component of defense mechanism. Shows antibacterial properties against Pseudomonas aeruginosa. The lactoperoxidase-SCN(-)-H2O2 system shows antibacterial properties against Burkholderia cepacia and Haemophilus influenzae in vitro. Present in mammary and salivary gland secretions and may contribute to airway host defense against infection. May contribute to maintaining an appropriate H2O2 cellular level, therefore protecting cells from H2O2-caused injuries and inflammation. In Homo sapiens (Human), this protein is Lactoperoxidase.